Consider the following 126-residue polypeptide: Large ribosomal subunit protein bL12 (126 aa).

It belongs to the bacterial ribosomal protein bL12 family. As to quaternary structure, homodimer. Part of the ribosomal stalk of the 50S ribosomal subunit. Forms a multimeric L10(L12)X complex, where L10 forms an elongated spine to which 2 to 4 L12 dimers bind in a sequential fashion. Binds GTP-bound translation factors.

Forms part of the ribosomal stalk which helps the ribosome interact with GTP-bound translation factors. Is thus essential for accurate translation. The polypeptide is Large ribosomal subunit protein bL12 (Rhizorhabdus wittichii (strain DSM 6014 / CCUG 31198 / JCM 15750 / NBRC 105917 / EY 4224 / RW1) (Sphingomonas wittichii)).